The following is a 1029-amino-acid chain: Chitin synthase 2 (1029 aa).

Disordered regions lie at residues 1–160, 174–216, and 234–257; these read MDRP…GARS, SDVD…SHLR, and AHYG…QKSR. The span at 61–77 shows a compositional bias: low complexity; that stretch reads PSVSSIHSRPSSISNIP. A compositionally biased stretch (basic and acidic residues) spans 244–257; sequence DQQRRGVREPQKSR. A glycan (N-linked (GlcNAc...) asparagine) is linked at Asn348. 8 consecutive transmembrane segments (helical) span residues 639–659, 681–701, 716–736, 752–772, 791–811, 820–840, 918–938, and 952–972; these read WLNG…QLWA, VLFT…VAGG, LYIF…QFIL, SMVI…YIVI, NLIV…FIYL, SIQY…YAFC, YMVV…SEIY, and ILWS…TFAI.

This sequence belongs to the chitin synthase family. Class II subfamily.

The protein resides in the cell membrane. It catalyses the reaction [(1-&gt;4)-N-acetyl-beta-D-glucosaminyl](n) + UDP-N-acetyl-alpha-D-glucosamine = [(1-&gt;4)-N-acetyl-beta-D-glucosaminyl](n+1) + UDP + H(+). Functionally, polymerizes chitin, a structural polymer of the cell wall and septum, by transferring the sugar moiety of UDP-GlcNAc to the non-reducing end of the growing chitin polymer. Plays an important role in cell wall integrity and has distinct functions in invasive hyphae and vegetative hyphae, but is not involved in plant infection. The protein is Chitin synthase 2 of Pyricularia oryzae (strain 70-15 / ATCC MYA-4617 / FGSC 8958) (Rice blast fungus).